A 284-amino-acid chain; its full sequence is F-box only protein 6 (284 aa).

One can recognise an F-box domain in the interval 1–48; that stretch reads MVNINELPENILLELFTHVPAPQLLRNCRLVCSLWRDLIDVMTLWKRK. The region spanning 69-250 is the FBA domain; that stretch reads FYILCSLQRN…VTNSSIIVSH (182 aa). Residues S249, S268, S275, S278, and S283 each carry the phosphoserine modification.

As to quaternary structure, part of a SCF (SKP1-cullin-F-box) protein ligase complex. Interacts with VCP, CHEK1 and CUL1.

The protein resides in the cytoplasm. The protein operates within protein modification; protein ubiquitination. Functionally, substrate-recognition component of some SCF (SKP1-CUL1-F-box protein)-type E3 ubiquitin ligase complexes. Involved in endoplasmic reticulum-associated degradation pathway (ERAD) for misfolded lumenal proteins by recognizing and binding sugar chains on unfolded glycoproteins that are retrotranslocated into the cytosol and promoting their ubiquitination and subsequent degradation. Able to recognize and bind denatured glycoproteins, which are modified with not only high-mannose but also complex-type oligosaccharides. Also recognizes sulfated glycans. Also involved in DNA damage response by specifically recognizing activated CHEK1 (phosphorylated on 'Ser-345'), promoting its ubiquitination and degradation. Ubiquitination of CHEK1 is required to ensure that activated CHEK1 does not accumulate as cells progress through S phase, or when replication forks encounter transient impediments during normal DNA replication. The chain is F-box only protein 6 (Fbxo6) from Rattus norvegicus (Rat).